Reading from the N-terminus, the 146-residue chain is Ribonuclease H (146 aa).

In terms of domain architecture, RNase H type-1 spans 1–136 (MKHIEIYTDG…CDTLAREAAL (136 aa)). Mg(2+)-binding residues include Asp-9, Glu-47, Asp-69, and Asp-128.

The protein belongs to the RNase H family. Monomer. The cofactor is Mg(2+).

Its subcellular location is the cytoplasm. It catalyses the reaction Endonucleolytic cleavage to 5'-phosphomonoester.. Its function is as follows. Endonuclease that specifically degrades the RNA of RNA-DNA hybrids. In Campylobacter jejuni subsp. jejuni serotype O:23/36 (strain 81-176), this protein is Ribonuclease H.